A 286-amino-acid polypeptide reads, in one-letter code: 4-hydroxybenzoate octaprenyltransferase (286 aa).

7 helical membrane passes run 21–40 (GTLLLLWPCLMALVLAAGGM), 96–116 (LFVILGLAAFGLVLLLNGLVV), 142–162 (FLGVVWSWSIPMAYAAQTGEV), 167–187 (WWLFAANWFWTVAYDTMYAMV), 210–230 (QIIGLFQFAALLCFIAAGWSA), 235–255 (LYGLGLLTFVGFSTYQQMLIF), and 266–286 (FLNNNWAGLALFVGLGADYLF).

This sequence belongs to the UbiA prenyltransferase family. Mg(2+) is required as a cofactor.

The protein resides in the cell inner membrane. The enzyme catalyses all-trans-octaprenyl diphosphate + 4-hydroxybenzoate = 4-hydroxy-3-(all-trans-octaprenyl)benzoate + diphosphate. It functions in the pathway cofactor biosynthesis; ubiquinone biosynthesis. Its function is as follows. Catalyzes the prenylation of para-hydroxybenzoate (PHB) with an all-trans polyprenyl group. Mediates the second step in the final reaction sequence of ubiquinone-8 (UQ-8) biosynthesis, which is the condensation of the polyisoprenoid side chain with PHB, generating the first membrane-bound Q intermediate 3-octaprenyl-4-hydroxybenzoate. In Shewanella sp. (strain MR-4), this protein is 4-hydroxybenzoate octaprenyltransferase.